Reading from the N-terminus, the 280-residue chain is UPF0276 protein NMA0228 (280 aa).

It belongs to the UPF0276 family.

In Neisseria meningitidis serogroup A / serotype 4A (strain DSM 15465 / Z2491), this protein is UPF0276 protein NMA0228.